The primary structure comprises 536 residues: Pre-mRNA-splicing factor SLU7 (536 aa).

Residues 22–42 (EARKAGLAPAEVDEDGKEINP) are disordered. The CCHC-type zinc finger occupies 94–111 (GACENCGAMTHDKKSCME). The segment at 178-201 (KLEEKDGEEGDENVASEEEDEEDG) is disordered. The span at 182–200 (KDGEEGDENVASEEEDEED) shows a compositional bias: acidic residues.

Belongs to the SLU7 family.

Its subcellular location is the nucleus. Functionally, participates in the second catalytic step of pre-mRNA splicing, when the free hydroxyl group of exon I attacks the 3'-splice site to generate spliced mRNA and the excised lariat intron. The polypeptide is Pre-mRNA-splicing factor SLU7 (Oryza sativa subsp. indica (Rice)).